A 95-amino-acid chain; its full sequence is Small ribosomal subunit protein bS16 (95 aa).

This sequence belongs to the bacterial ribosomal protein bS16 family.

The polypeptide is Small ribosomal subunit protein bS16 (Streptococcus pneumoniae (strain CGSP14)).